Consider the following 346-residue polypeptide: (R,R)-butanediol dehydrogenase (346 aa).

Zn(2+) is bound by residues Cys-37, His-70, and Glu-152.

Belongs to the zinc-containing alcohol dehydrogenase family. Homotetramer. Interacts with BrxC. Requires Zn(2+) as cofactor.

The protein localises to the cytoplasm. It localises to the secreted. The catalysed reaction is (R,R)-butane-2,3-diol + NAD(+) = (R)-acetoin + NADH + H(+). The protein is (R,R)-butanediol dehydrogenase of Bacillus subtilis (strain 168).